The chain runs to 282 residues: Putative phosphatase MPN_383 (282 aa).

The active-site Nucleophile is Asp11. Residue Asp11 coordinates Mg(2+). Leu12 is a phosphate binding site. Mg(2+) is bound at residue Asp13. Residues 45 to 46 (TG) and Lys207 contribute to the phosphate site. Asp230 is a Mg(2+) binding site. Asn233 is a phosphate binding site.

It belongs to the HAD-like hydrolase superfamily. Cof family. Mg(2+) serves as cofactor.

The polypeptide is Putative phosphatase MPN_383 (Mycoplasma pneumoniae (strain ATCC 29342 / M129 / Subtype 1) (Mycoplasmoides pneumoniae)).